Reading from the N-terminus, the 397-residue chain is Digeranylgeranylglycerophospholipid reductase 3 (397 aa).

FAD is bound by residues alanine 16, aspartate 35, cysteine 46, alanine 47, glycine 49, arginine 102, alanine 126, aspartate 283, glycine 295, and isoleucine 296. Lysine 338 serves as a coordination point for a 2,3-bis-O-(geranylgeranyl)-sn-glycerol 1-phospholipid.

The protein belongs to the geranylgeranyl reductase family. DGGGPL reductase subfamily. The cofactor is FAD.

It carries out the reaction a 2,3-bis-O-phytanyl-sn-glycerol 1-phospholipid + 8 A = a 2,3-bis-O-(geranylgeranyl)-sn-glycerol 1-phospholipid + 8 AH2. The catalysed reaction is 2,3-bis-O-(phytanyl)-sn-glycerol 1-phosphate + 8 A = 2,3-bis-O-(geranylgeranyl)-sn-glycerol 1-phosphate + 8 AH2. It catalyses the reaction CDP-2,3-bis-O-(geranylgeranyl)-sn-glycerol + 8 AH2 = CDP-2,3-bis-O-(phytanyl)-sn-glycerol + 8 A. The enzyme catalyses archaetidylserine + 8 AH2 = 2,3-bis-O-phytanyl-sn-glycero-3-phospho-L-serine + 8 A. It functions in the pathway membrane lipid metabolism; glycerophospholipid metabolism. Functionally, is involved in the reduction of 2,3-digeranylgeranylglycerophospholipids (unsaturated archaeols) into 2,3-diphytanylglycerophospholipids (saturated archaeols) in the biosynthesis of archaeal membrane lipids. Catalyzes the formation of archaetidic acid (2,3-di-O-phytanyl-sn-glyceryl phosphate) from 2,3-di-O-geranylgeranylglyceryl phosphate (DGGGP) via the hydrogenation of each double bond of the isoprenoid chains. Is also probably able to reduce double bonds of geranyl groups in CDP-2,3-bis-O-(geranylgeranyl)-sn-glycerol and archaetidylserine, thus acting at various stages in the biosynthesis of archaeal membrane lipids. This chain is Digeranylgeranylglycerophospholipid reductase 3, found in Methanosphaera stadtmanae (strain ATCC 43021 / DSM 3091 / JCM 11832 / MCB-3).